We begin with the raw amino-acid sequence, 267 residues long: Large ribosomal subunit protein mL57 (267 aa).

The span at Ser43–Ser54 shows a compositional bias: low complexity. Positions Ser43–Met73 are disordered.

Belongs to the ribonuclease III family. Mitochondrion-specific ribosomal protein mL57 subfamily. In terms of assembly, component of the mitochondrial large ribosomal subunit (mt-LSU). Mature N.crassa 74S mitochondrial ribosomes consist of a small (37S) and a large (54S) subunit. The 37S small subunit contains a 16S ribosomal RNA (16S mt-rRNA) and 32 different proteins. The 54S large subunit contains a 23S rRNA (23S mt-rRNA) and 42 different proteins. mL57 forms a heterodimer with mL44 and stabilizes rRNA expansion segments 1/2 at a membrane-facing protuberance close to the point of attachment of the ribosome to the translocon in the membrane.

The protein localises to the mitochondrion. Its function is as follows. Component of the mitochondrial ribosome (mitoribosome), a dedicated translation machinery responsible for the synthesis of mitochondrial genome-encoded proteins, including at least some of the essential transmembrane subunits of the mitochondrial respiratory chain. The mitoribosomes are attached to the mitochondrial inner membrane and translation products are cotranslationally integrated into the membrane. This Neurospora crassa (strain ATCC 24698 / 74-OR23-1A / CBS 708.71 / DSM 1257 / FGSC 987) protein is Large ribosomal subunit protein mL57 (mrpl15).